We begin with the raw amino-acid sequence, 133 residues long: Profilin-1 (133 aa).

Belongs to the profilin family. In terms of assembly, occurs in many kinds of cells as a complex with monomeric actin in a 1:1 ratio. As to expression, ubiquitous.

Its subcellular location is the cytoplasm. It localises to the cytoskeleton. Binds to actin and affects the structure of the cytoskeleton. At high concentrations, profilin prevents the polymerization of actin, whereas it enhances it at low concentrations. By binding to PIP2, it inhibits the formation of IP3 and DG. This Solanum lycopersicum (Tomato) protein is Profilin-1 (PRO1).